We begin with the raw amino-acid sequence, 538 residues long: Beta-1,4-mannosyl-glycoprotein 4-beta-N-acetylglucosaminyltransferase (538 aa).

Over 1-7 the chain is Cytoplasmic; it reads MKMRRYK. A helical; Signal-anchor for type II membrane protein membrane pass occupies residues 8–23; the sequence is LFLMFCMAGLCLISFL. At 24 to 538 the chain is on the lumenal side; it reads HFFKTLSYVT…VRGKLDTTEG (515 aa). Residues 121–151 form a disordered region; sequence GTRMLEKPSPGRTEEKTKVAEGSSVRGPARR. Asn245, Asn263, and Asn401 each carry an N-linked (GlcNAc...) asparagine glycan. The interval 509–538 is disordered; sequence PKSTVEGGRRNQGSDGRSSAVRGKLDTTEG.

The protein belongs to the glycosyltransferase 17 family. In terms of assembly, interacts with MGAT4D.

Its subcellular location is the golgi apparatus membrane. It catalyses the reaction N(4)-{beta-D-GlcNAc-(1-&gt;2)-alpha-D-Man-(1-&gt;3)-[beta-D-GlcNAc-(1-&gt;2)-alpha-D-Man-(1-&gt;6)]-beta-D-Man-(1-&gt;4)-beta-D-GlcNAc-(1-&gt;4)-beta-D-GlcNAc}-L-asparaginyl-[protein] + UDP-N-acetyl-alpha-D-glucosamine = N(4)-{beta-D-GlcNAc-(1-&gt;2)-alpha-D-Man-(1-&gt;3)-[beta-D-GlcNAc-(1-&gt;4)]-[beta-D-GlcNAc-(1-&gt;2)-alpha-D-Man-(1-&gt;6)]-beta-D-Man-(1-&gt;4)-beta-D-GlcNAc-(1-&gt;4)-beta-D-GlcNAc}-L-asparaginyl-[protein] + UDP + H(+). It functions in the pathway protein modification; protein glycosylation. It is involved in the regulation of the biosynthesis and biological function of glycoprotein oligosaccharides. Catalyzes the addition of N-acetylglucosamine in beta 1-4 linkage to the beta-linked mannose of the trimannosyl core of N-linked sugar chains, called bisecting N-acetylglucosamine (GlcNAc). It is one of the most important enzymes involved in the regulation of the biosynthesis of glycoprotein oligosaccharides. The addition of this bisecting GlcNAc residue alters not only the composition, but also the conformation of the N-glycan. The introduction of the bisecting GlcNAc residue results in the suppression of further processing and elongation of N-glycans, precluding the formation of beta-1,6 GlcNAc branching, catalyzed by MGAT5 since it is unable to use the bisected oligosaccharide as a substrate. Addition of bisecting N-acetylglucosamine to CDH1/E-cadherin modulates CDH1 cell membrane location. Inhibits NeuAc-alpha-2,3-Gal-beta-1,4-GlcNAc- formation which modulates sialylation levels and plays a role in cell migration regulation. In brain, addition of bisecting N-acetylglucosamine to BACE1 blocks its lysosomal targeting in response to oxidative stress and further degradation which increases its location to early endosome and the APP cleavage. This Rattus norvegicus (Rat) protein is Beta-1,4-mannosyl-glycoprotein 4-beta-N-acetylglucosaminyltransferase (Mgat3).